A 381-amino-acid chain; its full sequence is Meiotic recombination protein SPO11-1 (381 aa).

Residues 23 to 162 enclose the Topo IIA-type catalytic domain; sequence EEAATLLHRI…LNVVPVAKGL (140 aa). Tyr-123 serves as the catalytic O-(5'-phospho-DNA)-tyrosine intermediate. The Mg(2+) site is built by Glu-209 and Asp-261.

Belongs to the TOP6A family. The cofactor is Mg(2+). In terms of tissue distribution, highly expressed in flowers before pollination. Expressed in roots and shoots.

The protein resides in the nucleus. It catalyses the reaction ATP-dependent breakage, passage and rejoining of double-stranded DNA.. Required for meiotic recombination. Mediates DNA cleavage that forms the double-strand breaks (DSB) that initiate meiotic recombination. May be involved in plant growth and development, and stress tolerance. The chain is Meiotic recombination protein SPO11-1 (SPO11-1) from Oryza sativa subsp. indica (Rice).